A 218-amino-acid polypeptide reads, in one-letter code: 7-cyano-7-deazaguanine synthase (218 aa).

9–19 (YSGGMDSFTVL) is an ATP binding site. Positions 185, 193, 196, and 199 each coordinate Zn(2+).

The protein belongs to the QueC family. The cofactor is Zn(2+).

It carries out the reaction 7-carboxy-7-deazaguanine + NH4(+) + ATP = 7-cyano-7-deazaguanine + ADP + phosphate + H2O + H(+). It participates in purine metabolism; 7-cyano-7-deazaguanine biosynthesis. Its function is as follows. Catalyzes the ATP-dependent conversion of 7-carboxy-7-deazaguanine (CDG) to 7-cyano-7-deazaguanine (preQ(0)). The polypeptide is 7-cyano-7-deazaguanine synthase (Alteromonas mediterranea (strain DSM 17117 / CIP 110805 / LMG 28347 / Deep ecotype)).